The chain runs to 467 residues: Probable protein phosphatase 2C 6 (467 aa).

A disordered region spans residues 61–81; sequence VEDDAVAPGRGEEGGEASAVG. The PPM-type phosphatase domain maps to 149–457; that stretch reads LWGHKSICGR…DNISVIVVDL (309 aa). The Mn(2+) site is built by Asp-205, Gly-206, Asp-386, and Asp-448.

This sequence belongs to the PP2C family. In terms of assembly, interacts with PYL9. Mg(2+) is required as a cofactor. The cofactor is Mn(2+).

It is found in the nucleus. The protein resides in the cytoplasm. It localises to the cytosol. The enzyme catalyses O-phospho-L-seryl-[protein] + H2O = L-seryl-[protein] + phosphate. It carries out the reaction O-phospho-L-threonyl-[protein] + H2O = L-threonyl-[protein] + phosphate. Probable protein phosphatase that may function in abscisic acid (ABA) signaling. This Oryza sativa subsp. japonica (Rice) protein is Probable protein phosphatase 2C 6.